The primary structure comprises 585 residues: Neopullulanase 2 (585 aa).

The Ca(2+) site is built by N143, D145, N148, D149, G169, and D171. Substrate contacts are provided by H244 and R323. D325 serves as the catalytic Nucleophile. The active-site Proton donor is E354. Substrate-binding positions include 420–421 (HD), D465, and R469.

The protein belongs to the glycosyl hydrolase 13 family. In terms of assembly, monomer. Ca(2+) serves as cofactor.

The enzyme catalyses Hydrolysis of pullulan to panose (6-alpha-D-glucosylmaltose).. Its function is as follows. Hydrolyzes pullulan efficiently but only a small amount of starch. Endohydrolysis of 1,4-alpha-glucosidic linkages in pullulan to form panose. Also cleaves (1-6)-alpha-glucosidic linkages to form maltotriose. This chain is Neopullulanase 2 (tvaII), found in Thermoactinomyces vulgaris.